The primary structure comprises 210 residues: Guanylate kinase (210 aa).

Residues 5 to 184 enclose the Guanylate kinase-like domain; sequence GLLIVFSGPS…AAERVKHIIE (180 aa). 12-19 is an ATP binding site; that stretch reads GPSGVGKG.

It belongs to the guanylate kinase family.

Its subcellular location is the cytoplasm. It catalyses the reaction GMP + ATP = GDP + ADP. Functionally, essential for recycling GMP and indirectly, cGMP. The polypeptide is Guanylate kinase (Streptococcus mutans serotype c (strain ATCC 700610 / UA159)).